A 259-amino-acid polypeptide reads, in one-letter code: Insulin-induced gene 1 protein (259 aa).

Residues 1-66 (MPRLHDHVWS…ARPGSWHHDL (66 aa)) lie on the Cytoplasmic side of the membrane. A disordered region spans residues 33–57 (PQGPGAPEPEPAPRGQREGTAGFSA). A helical transmembrane segment spans residues 67 to 89 (VQRSLVLFSFGVVLALVLNLLQI). The Extracellular portion of the chain corresponds to 90–108 (QRNVTLFPDEVIATIFSSA). Residues 109–126 (WWVPPCCGTAAAVVGLLY) traverse the membrane as a helical segment. Residues 127–141 (PCIDSHLGEPHKFKR) are Cytoplasmic-facing. Glycyl lysine isopeptide (Lys-Gly) (interchain with G-Cter in ubiquitin) cross-links involve residues Lys-138 and Lys-140. The chain crosses the membrane as a helical span at residues 142–164 (EWASVMRCIAVFVGINHASAKLD). Over 165 to 167 (FAN) the chain is Extracellular. Residues 168-186 (NVQLSLTLAALSLGLWWTF) traverse the membrane as a helical segment. Residues 187 to 191 (DRSRS) are Cytoplasmic-facing. Phosphoserine is present on Ser-189. Residues 192-213 (GLGLGITIAFLATLITQFLVYN) traverse the membrane as a helical segment. The Extracellular portion of the chain corresponds to 214-227 (GVYQYTSPDFLYIR). The helical transmembrane segment at 228 to 245 (SWLPCIFFSGGVTVGNIG) threads the bilayer. At 246–259 (RQLAMGVPEKPHSD) the chain is on the cytoplasmic side. Positions 253–259 (PEKPHSD) match the KxHxx motif.

It belongs to the INSIG family. Interacts with SCAP; interaction is direct and only takes place in the presence of sterols; it prevents interaction between SCAP and the coat protein complex II (COPII). Associates with the SCAP-SREBP complex (composed of SCAP and SREBF1/SREBP1 or SREBF2/SREBP2); association is mediated via its interaction with SCAP and only takes place in the presence of sterols. Interaction with SCAP is mutually exclusive with PAQR3. Interacts with HMGCR (via its SSD); the interaction, accelerated by sterols, leads to the recruitment of HMGCR to AMFR/gp78 for its ubiquitination by the sterol-mediated ERAD pathway. Interacts with AMFR/gp78 (via its membrane domain); the interaction recruits HMCR at the ER membrane for its ubiquitination and degradation by the sterol-mediated ERAD pathway. Interacts with SOAT2/ACAT2; leading to promote recruitment of AMFR/gp78 and subsequent ubiquitination of SOAT2/ACAT2. Interacts with RNF139. Interacts with RNF145. In terms of processing, phosphorylation at Ser-189 by PCK1 reduces binding to oxysterol, disrupting the interaction between INSIG1 and SCAP, thereby promoting nuclear translocation of SREBP proteins (SREBF1/SREBP1 or SREBF2/SREBP2) and subsequent transcription of downstream lipogenesis-related genes. Ubiquitinated by AMFR/gp78 in response to sterol deprivation, leading to its degradation: when the SCAP-SREBP complex becomes dissociated from INSIG1, INSIG1 is then ubiquitinated and degraded in proteasomes. Although ubiquitination is required for rapid INSIG1 degradation, it is not required for release of the SCAP-SREBP complex. Ubiquitinated by RNF139. Highly expressed in liver and kidney.

The protein resides in the endoplasmic reticulum membrane. In terms of biological role, oxysterol-binding protein that mediates feedback control of cholesterol synthesis by controlling both endoplasmic reticulum to Golgi transport of SCAP and degradation of HMGCR. Acts as a negative regulator of cholesterol biosynthesis by mediating the retention of the SCAP-SREBP complex in the endoplasmic reticulum, thereby blocking the processing of sterol regulatory element-binding proteins (SREBPs) SREBF1/SREBP1 and SREBF2/SREBP2. Binds oxysterol, including 25-hydroxycholesterol, regulating interaction with SCAP and retention of the SCAP-SREBP complex in the endoplasmic reticulum. In presence of oxysterol, interacts with SCAP, retaining the SCAP-SREBP complex in the endoplasmic reticulum, thereby preventing SCAP from escorting SREBF1/SREBP1 and SREBF2/SREBP2 to the Golgi. Sterol deprivation or phosphorylation by PCK1 reduce oxysterol-binding, disrupting the interaction between INSIG1 and SCAP, thereby promoting Golgi transport of the SCAP-SREBP complex, followed by processing and nuclear translocation of SREBF1/SREBP1 and SREBF2/SREBP2. Also regulates cholesterol synthesis by regulating degradation of HMGCR: initiates the sterol-mediated ubiquitin-mediated endoplasmic reticulum-associated degradation (ERAD) of HMGCR via recruitment of the reductase to the ubiquitin ligases AMFR/gp78 and/or RNF139. Also regulates degradation of SOAT2/ACAT2 when the lipid levels are low: initiates the ubiquitin-mediated degradation of SOAT2/ACAT2 via recruitment of the ubiquitin ligases AMFR/gp78. This chain is Insulin-induced gene 1 protein, found in Rattus norvegicus (Rat).